We begin with the raw amino-acid sequence, 197 residues long: Nucleoid occlusion factor SlmA (197 aa).

The 61-residue stretch at 7–67 folds into the HTH tetR-type domain; sequence INRREHILQC…GLIDFIEESL (61 aa). Residues 30–49 constitute a DNA-binding region (H-T-H motif); that stretch reads TTAKLAAEVGVSEAALYRHF.

This sequence belongs to the nucleoid occlusion factor SlmA family. As to quaternary structure, homodimer. Interacts with FtsZ.

The protein resides in the cytoplasm. It is found in the nucleoid. Its function is as follows. Required for nucleoid occlusion (NO) phenomenon, which prevents Z-ring formation and cell division over the nucleoid. Acts as a DNA-associated cell division inhibitor that binds simultaneously chromosomal DNA and FtsZ, and disrupts the assembly of FtsZ polymers. SlmA-DNA-binding sequences (SBS) are dispersed on non-Ter regions of the chromosome, preventing FtsZ polymerization at these regions. The chain is Nucleoid occlusion factor SlmA from Shewanella sediminis (strain HAW-EB3).